A 138-amino-acid chain; its full sequence is Putative pre-16S rRNA nuclease (138 aa).

Belongs to the YqgF nuclease family.

It localises to the cytoplasm. Could be a nuclease involved in processing of the 5'-end of pre-16S rRNA. The protein is Putative pre-16S rRNA nuclease of Shigella dysenteriae serotype 1 (strain Sd197).